A 252-amino-acid chain; its full sequence is tRNA-cytidine(32) 2-sulfurtransferase (252 aa).

Positions 37 to 42 match the PP-loop motif motif; sequence SGGKDS. [4Fe-4S] cluster-binding residues include Cys112, Cys115, and Cys202.

It belongs to the TtcA family. Homodimer. The cofactor is Mg(2+). [4Fe-4S] cluster is required as a cofactor.

Its subcellular location is the cytoplasm. The enzyme catalyses cytidine(32) in tRNA + S-sulfanyl-L-cysteinyl-[cysteine desulfurase] + AH2 + ATP = 2-thiocytidine(32) in tRNA + L-cysteinyl-[cysteine desulfurase] + A + AMP + diphosphate + H(+). It participates in tRNA modification. Catalyzes the ATP-dependent 2-thiolation of cytidine in position 32 of tRNA, to form 2-thiocytidine (s(2)C32). The sulfur atoms are provided by the cysteine/cysteine desulfurase (IscS) system. The chain is tRNA-cytidine(32) 2-sulfurtransferase from Geotalea daltonii (strain DSM 22248 / JCM 15807 / FRC-32) (Geobacter daltonii).